A 474-amino-acid chain; its full sequence is 3-isopropylmalate dehydratase large subunit (474 aa).

3 residues coordinate [4Fe-4S] cluster: Cys-355, Cys-415, and Cys-418.

The protein belongs to the aconitase/IPM isomerase family. LeuC type 1 subfamily. As to quaternary structure, heterodimer of LeuC and LeuD. The cofactor is [4Fe-4S] cluster.

The enzyme catalyses (2R,3S)-3-isopropylmalate = (2S)-2-isopropylmalate. It functions in the pathway amino-acid biosynthesis; L-leucine biosynthesis; L-leucine from 3-methyl-2-oxobutanoate: step 2/4. Its function is as follows. Catalyzes the isomerization between 2-isopropylmalate and 3-isopropylmalate, via the formation of 2-isopropylmaleate. This is 3-isopropylmalate dehydratase large subunit from Shewanella oneidensis (strain ATCC 700550 / JCM 31522 / CIP 106686 / LMG 19005 / NCIMB 14063 / MR-1).